Consider the following 393-residue polypeptide: UDP-glucose 6-dehydrogenase (393 aa).

Positions 11, 31, 36, 85, 120, and 147 each coordinate NAD(+). Residues 143–147 (EFLRE), lysine 199, asparagine 203, 244–248 (YNNPS), and glycine 252 each bind substrate. Residue tyrosine 254 participates in NAD(+) binding. Residue cysteine 255 is the Nucleophile of the active site. Position 258 (lysine 258) interacts with NAD(+). Lysine 309 serves as a coordination point for substrate. Position 316 (arginine 316) interacts with NAD(+).

The protein belongs to the UDP-glucose/GDP-mannose dehydrogenase family. In terms of assembly, homodimer.

The enzyme catalyses UDP-alpha-D-glucose + 2 NAD(+) + H2O = UDP-alpha-D-glucuronate + 2 NADH + 3 H(+). The protein operates within nucleotide-sugar biosynthesis; UDP-alpha-D-glucuronate biosynthesis; UDP-alpha-D-glucuronate from UDP-alpha-D-glucose: step 1/1. It functions in the pathway capsule biogenesis; capsule polysaccharide biosynthesis. Catalyzes the formation of UDP-glucuronic acid which is required for capsular polysaccharide synthesis. Does not catalyze the formation of glucuronamide moiety of the capsular polysaccharide. This Campylobacter jejuni subsp. jejuni serotype O:2 (strain ATCC 700819 / NCTC 11168) protein is UDP-glucose 6-dehydrogenase.